A 234-amino-acid chain; its full sequence is Sugar fermentation stimulation protein A (234 aa).

Residues Leu-201–Ser-220 constitute a DNA-binding region (H-T-H motif).

Belongs to the SfsA family.

Functionally, binds to DNA non-specifically. Could be a regulatory factor involved in maltose metabolism. The sequence is that of Sugar fermentation stimulation protein A from Shigella sonnei (strain Ss046).